The following is a 379-amino-acid chain: Retron Se72 reverse transcriptase (379 aa).

The 245-residue stretch at 1–245 folds into the Reverse transcriptase domain; it reads MNKPRFNGTP…SKLSVTGLWV (245 aa). Residues aspartate 109, aspartate 188, and aspartate 189 each contribute to the Mg(2+) site.

This sequence belongs to the bacterial reverse transcriptase family.

The enzyme catalyses DNA(n) + a 2'-deoxyribonucleoside 5'-triphosphate = DNA(n+1) + diphosphate. Reverse transcriptase (RT) component of antiviral defense system retron Se72, composed of a non-coding RNA (ncRNA), this reverse transcriptase (RT) and the following cold shock-like protein. Expression of retron Se72 confers protection against bacteriophage lambda. At multiplicity of infection (MOI) of 0.02 cultures slow growth when infected with lambda but do not collapse, at MOI 2 cultures enter growth stasis. Responsible for synthesis of msDNA (a branched molecule with RNA linked by a 2',5'-phosphodiester bond to ssDNA). The retron transcript serves as primer (from a conserved internal G residue) and template for the reaction, and codes for the RT. The DNA segment is predicted to be 72 bases long. The polypeptide is Retron Se72 reverse transcriptase (Salmonella heidelberg (strain 579083-10)).